Reading from the N-terminus, the 170-residue chain is Methanogen homoaconitase small subunit (170 aa).

Residues tyrosine 24–threonine 27 carry the YLRT motif.

Belongs to the LeuD family. LeuD type 2 subfamily. In terms of assembly, heterotetramer of 2 HacA and 2 HacB proteins. Cannot form a complex with LeuC.

It carries out the reaction (2R)-homocitrate = (2R,3S)-homoisocitrate. The enzyme catalyses (2R)-homocitrate = cis-homoaconitate + H2O. The catalysed reaction is (2R,3S)-homoisocitrate = cis-homoaconitate + H2O. It catalyses the reaction cis-(homo)2aconitate + H2O = (2R,3S)-iso(homo)2citrate. It carries out the reaction cis-(homo)3aconitate + H2O = (2R,3S)-iso(homo)3citrate. The enzyme catalyses (R)-malate = maleate + H2O. The catalysed reaction is cis-aconitate + H2O = D-threo-isocitrate. Its pathway is organic acid metabolism; 2-oxosuberate biosynthesis. Its function is as follows. Component of a hydro-lyase with broad substrate specificity for cis-unsaturated tricarboxylic acids. Catalyzes both the reversible dehydration of (R)-homocitrate ((R)-2-hydroxybutane-1,2,4-tricarboxylate) to produce cis-homoaconitate ((Z)-but-1-ene-1,2,4-tricarboxylate), and its hydration to homoisocitrate ((1R,2S)-1-hydroxybutane-1,2,4-tricarboxylate). Is also able to hydrate the analogous longer chain substrates cis-homo(2)-aconitate, cis-homo(3)-aconitate, and even the non-physiological cis-homo(4)-aconitate with similar efficiency. These reactions are part of the biosynthesis pathway of coenzyme B. Can also catalyze the hydration of maleate to (R)-malate, and that of cis-aconitate. Cannot catalyze the hydration of citraconate and the dehydration of (S)-homocitrate, citramalate, 2-isopropylmalate, 3-isopropylmalate, citrate or threo-DL-isocitrate. The protein is Methanogen homoaconitase small subunit (hacB) of Methanocaldococcus jannaschii (strain ATCC 43067 / DSM 2661 / JAL-1 / JCM 10045 / NBRC 100440) (Methanococcus jannaschii).